A 360-amino-acid polypeptide reads, in one-letter code: Peptide chain release factor 1 (360 aa).

Glutamine 236 carries the post-translational modification N5-methylglutamine.

The protein belongs to the prokaryotic/mitochondrial release factor family. Post-translationally, methylated by PrmC. Methylation increases the termination efficiency of RF1.

The protein localises to the cytoplasm. Its function is as follows. Peptide chain release factor 1 directs the termination of translation in response to the peptide chain termination codons UAG and UAA. The sequence is that of Peptide chain release factor 1 from Lactiplantibacillus plantarum (strain ATCC BAA-793 / NCIMB 8826 / WCFS1) (Lactobacillus plantarum).